The chain runs to 500 residues: Glycerol kinase (500 aa).

Thr-11 lines the ADP pocket. Thr-11, Thr-12, and Ser-13 together coordinate ATP. Thr-11 lines the sn-glycerol 3-phosphate pocket. Arg-15 is an ADP binding site. Sn-glycerol 3-phosphate-binding residues include Arg-81, Glu-82, Tyr-133, and Asp-242. The glycerol site is built by Arg-81, Glu-82, Tyr-133, Asp-242, and Gln-243. 2 residues coordinate ADP: Thr-264 and Gly-307. Residues Thr-264, Gly-307, Gln-311, and Gly-411 each coordinate ATP. Residue Gly-411 participates in ADP binding.

Belongs to the FGGY kinase family.

It catalyses the reaction glycerol + ATP = sn-glycerol 3-phosphate + ADP + H(+). The protein operates within polyol metabolism; glycerol degradation via glycerol kinase pathway; sn-glycerol 3-phosphate from glycerol: step 1/1. With respect to regulation, inhibited by fructose 1,6-bisphosphate (FBP). Functionally, key enzyme in the regulation of glycerol uptake and metabolism. Catalyzes the phosphorylation of glycerol to yield sn-glycerol 3-phosphate. The protein is Glycerol kinase of Bradyrhizobium sp. (strain BTAi1 / ATCC BAA-1182).